We begin with the raw amino-acid sequence, 120 residues long: Large ribosomal subunit protein bL17 (120 aa).

It belongs to the bacterial ribosomal protein bL17 family. In terms of assembly, part of the 50S ribosomal subunit. Contacts protein L32.

The sequence is that of Large ribosomal subunit protein bL17 from Geobacillus kaustophilus (strain HTA426).